A 327-amino-acid polypeptide reads, in one-letter code: Plastid lipid-associated protein 1, chloroplastic (327 aa).

The N-terminal 84 residues, 1-84, are a transit peptide targeting the chloroplast; sequence MATTVPLFSQ…WGPEIGLNSS (84 aa). Residues 56 to 78 are disordered; the sequence is VNDEWGPDSKGRGGDVDDEWGPE. Positions 85-107 form a coiled coil; sequence VAEKVAEEAIESAEETERLKRVL.

Belongs to the PAP/fibrillin family. Expressed in anthers, sepals seeds, fruit coats, and leaves. Very low in petals and pistils and not detected in roots.

Its subcellular location is the plastid. The protein resides in the chloroplast. May modulate the action of carotenoids. The sequence is that of Plastid lipid-associated protein 1, chloroplastic (PAP1) from Brassica campestris (Field mustard).